A 314-amino-acid chain; its full sequence is tRNA dimethylallyltransferase (314 aa).

Residue 13-20 participates in ATP binding; that stretch reads GPTAVGKT. 15-20 contacts substrate; that stretch reads TAVGKT. The segment at 38-41 is interaction with substrate tRNA; it reads DSMQ.

This sequence belongs to the IPP transferase family. In terms of assembly, monomer. Mg(2+) is required as a cofactor.

The enzyme catalyses adenosine(37) in tRNA + dimethylallyl diphosphate = N(6)-dimethylallyladenosine(37) in tRNA + diphosphate. In terms of biological role, catalyzes the transfer of a dimethylallyl group onto the adenine at position 37 in tRNAs that read codons beginning with uridine, leading to the formation of N6-(dimethylallyl)adenosine (i(6)A). This chain is tRNA dimethylallyltransferase, found in Bacillus licheniformis (strain ATCC 14580 / DSM 13 / JCM 2505 / CCUG 7422 / NBRC 12200 / NCIMB 9375 / NCTC 10341 / NRRL NRS-1264 / Gibson 46).